Consider the following 430-residue polypeptide: Enolase (430 aa).

Glutamine 167 provides a ligand contact to (2R)-2-phosphoglycerate. Residue glutamate 209 is the Proton donor of the active site. 3 residues coordinate Mg(2+): aspartate 246, glutamate 287, and aspartate 314. Lysine 339, arginine 368, serine 369, and lysine 390 together coordinate (2R)-2-phosphoglycerate. Catalysis depends on lysine 339, which acts as the Proton acceptor.

Belongs to the enolase family. Requires Mg(2+) as cofactor.

The protein resides in the cytoplasm. Its subcellular location is the secreted. It is found in the cell surface. It carries out the reaction (2R)-2-phosphoglycerate = phosphoenolpyruvate + H2O. It participates in carbohydrate degradation; glycolysis; pyruvate from D-glyceraldehyde 3-phosphate: step 4/5. Catalyzes the reversible conversion of 2-phosphoglycerate (2-PG) into phosphoenolpyruvate (PEP). It is essential for the degradation of carbohydrates via glycolysis. The protein is Enolase of Prochlorococcus marinus (strain MIT 9215).